The following is a 468-amino-acid chain: Argininosuccinate lyase (468 aa).

It belongs to the lyase 1 family. Argininosuccinate lyase subfamily.

Its subcellular location is the cytoplasm. The enzyme catalyses 2-(N(omega)-L-arginino)succinate = fumarate + L-arginine. It participates in amino-acid biosynthesis; L-arginine biosynthesis; L-arginine from L-ornithine and carbamoyl phosphate: step 3/3. The polypeptide is Argininosuccinate lyase (Hahella chejuensis (strain KCTC 2396)).